The following is a 281-amino-acid chain: Probable replication-associated protein repA1 (281 aa).

This sequence belongs to the IncFII RepA family.

In terms of biological role, this protein is essential for plasmid replication; it is involved in copy control functions. The chain is Probable replication-associated protein repA1 (repA1) from Buchnera aphidicola subsp. Cinara cedri (strain Cc).